Consider the following 334-residue polypeptide: MSINMNANFLKLLTHFRRHDLTNFKSEHDTLYEKALETGDHLEVTSHYYSVMSTVIDEYFGGNFHFVPPKFEGQKLEEALKSLHCHIAEKLELSENVHCLDIGCGIGGVMLDIADFGAKLTGVTIAPNEAEIGNEKFANMGISDRCKIVAADCQKMPFEDSTFDVAYAIYSLKYIPNLDKVMKEIQRVLKPGGKFIVYDLIKTNDYDKDNKEHYKTLHHLEYACGMPSLHTQSEVEAAAEKWEMPVVERENLEETYGNRAFHYCFSASPMFMWLVSSPVIDHTIRMAEILRILPAGFKQFNRTFLCGTVNSIVGGGRMGILSGADILLFEKKKI.

It belongs to the class I-like SAM-binding methyltransferase superfamily. Erg6/SMT family. In terms of tissue distribution, expressed in the pharynx and hypodermal syncytium.

It catalyses the reaction 5alpha-cholest-7-en-3-one + S-adenosyl-L-methionine = 4alpha-methyl-5alpha-cholest-7-en-3-one + S-adenosyl-L-homocysteine + H(+). Its pathway is steroid hormone biosynthesis; dafachronic acid biosynthesis. Its function is as follows. Catalyzes the methyl transfer from S-adenosyl-methionine to the C-4 of the A-ring sterols such as lathosterone (5alpha-cholest-7-en-3-one) thereby rendering them unsuitable as ligand precursors. May irreversibly shunt sterols away from hormone dafachronic acid production. Dafachronic acids act as ligands and bind directly to the nuclear hormone receptor (NHR) daf-12 suppressing dauer formation and inducing reproductive growth. By reducing the biosynthesis of dafachronic acids, this methyltransferase can regulate dauer larva formation. In Caenorhabditis elegans, this protein is Sterol 4-C-methyltransferase strm-1 (strm-1).